The following is a 477-amino-acid chain: UDP-N-acetylmuramate--L-alanine ligase (477 aa).

Residue glycine 120 to threonine 126 participates in ATP binding.

Belongs to the MurCDEF family.

The protein localises to the cytoplasm. The enzyme catalyses UDP-N-acetyl-alpha-D-muramate + L-alanine + ATP = UDP-N-acetyl-alpha-D-muramoyl-L-alanine + ADP + phosphate + H(+). It functions in the pathway cell wall biogenesis; peptidoglycan biosynthesis. In terms of biological role, cell wall formation. This chain is UDP-N-acetylmuramate--L-alanine ligase, found in Rickettsia canadensis (strain McKiel).